An 895-amino-acid polypeptide reads, in one-letter code: Isoleucine--tRNA ligase (895 aa).

A 'HIGH' region motif is present at residues 57 to 67 (PYANGSIHVGH). Position 549 (glutamate 549) interacts with L-isoleucyl-5'-AMP. The 'KMSKS' region motif lies at 590–594 (KMSKS). ATP is bound at residue lysine 593. Zn(2+) is bound by residues cysteine 869, cysteine 872, cysteine 888, and cysteine 891.

This sequence belongs to the class-I aminoacyl-tRNA synthetase family. IleS type 1 subfamily. In terms of assembly, monomer. It depends on Zn(2+) as a cofactor.

Its subcellular location is the cytoplasm. It catalyses the reaction tRNA(Ile) + L-isoleucine + ATP = L-isoleucyl-tRNA(Ile) + AMP + diphosphate. In terms of biological role, catalyzes the attachment of isoleucine to tRNA(Ile). As IleRS can inadvertently accommodate and process structurally similar amino acids such as valine, to avoid such errors it has two additional distinct tRNA(Ile)-dependent editing activities. One activity is designated as 'pretransfer' editing and involves the hydrolysis of activated Val-AMP. The other activity is designated 'posttransfer' editing and involves deacylation of mischarged Val-tRNA(Ile). This chain is Isoleucine--tRNA ligase, found in Mycoplasma genitalium (strain ATCC 33530 / DSM 19775 / NCTC 10195 / G37) (Mycoplasmoides genitalium).